The following is a 516-amino-acid chain: Protein BTN1 (516 aa).

8 helical membrane passes run 24–44 (LFAAFMIFGLLNNVLYVIILS), 57–77 (GVVALFNIFPALITKVVWPLL), 88–108 (VGFCTICSWFGIITIALSSSL), 112–132 (LLGISLASLSSGMGELTFLQL), 146–166 (LGAWSSGTGFAGVAGAGIWWL), 169–189 (GLGVKGGLGLSSFLPLFFPIT), 371–391 (PAIIQFLVLSLLFLQAKTFFF), and 409–429 (SITIVFLLICLEGLCGGSGYV).

This sequence belongs to the battenin family.

Its subcellular location is the vacuole membrane. Involved in vacuolar transport and vacuole pH homeostasis. Also required for cytokinesis. The polypeptide is Protein BTN1 (BTN1) (Cryptococcus neoformans var. neoformans serotype D (strain JEC21 / ATCC MYA-565) (Filobasidiella neoformans)).